The primary structure comprises 94 residues: C-C motif chemokine 26 (94 aa).

Positions 1–23 (MMGLSLASAVLLASLLSLHLGTA) are cleaved as a signal peptide. 2 disulfides stabilise this stretch: cysteine 33–cysteine 57 and cysteine 34–cysteine 73.

The protein belongs to the intercrine beta (chemokine CC) family. In terms of assembly, monomer. As to expression, ubiquitously expressed at low levels in various tissues including heart and ovary.

It localises to the secreted. Functionally, chemoattractant for eosinophils and basophils. Acts as a ligand for C-C chemokine receptor CCR3 which triggers Ca(2+) mobilization in eosinophils. Also acts as a ligand for CX3C chemokine receptor CX3CR1, inducing cell chemotaxis. The protein is C-C motif chemokine 26 of Homo sapiens (Human).